Consider the following 348-residue polypeptide: Phenylalanine--tRNA ligase alpha subunit (348 aa).

Glu-259 contacts Mg(2+).

This sequence belongs to the class-II aminoacyl-tRNA synthetase family. Phe-tRNA synthetase alpha subunit type 1 subfamily. As to quaternary structure, tetramer of two alpha and two beta subunits. The cofactor is Mg(2+).

The protein localises to the cytoplasm. The catalysed reaction is tRNA(Phe) + L-phenylalanine + ATP = L-phenylalanyl-tRNA(Phe) + AMP + diphosphate + H(+). The sequence is that of Phenylalanine--tRNA ligase alpha subunit from Ligilactobacillus salivarius (strain UCC118) (Lactobacillus salivarius).